A 98-amino-acid polypeptide reads, in one-letter code: Small ribosomal subunit protein bS20 (98 aa).

The tract at residues 76 to 98 is disordered; that stretch reads HPNNGARKKSRLASKLKPIEQTA.

This sequence belongs to the bacterial ribosomal protein bS20 family.

Binds directly to 16S ribosomal RNA. The protein is Small ribosomal subunit protein bS20 of Trichormus variabilis (strain ATCC 29413 / PCC 7937) (Anabaena variabilis).